Consider the following 237-residue polypeptide: Regulator of G-protein signaling 9-binding protein (237 aa).

Topologically, residues 1–214 (MAKEECKALL…TGPCDLSKAK (214 aa)) are cytoplasmic. 2 coiled-coil regions span residues 29-58 (GSAD…RLRL) and 144-169 (VEDL…MKVN). Residues 153–202 (EILQVGEMIQDMEMKVNVPRWTVQARQAAGAELLSSASAGVSSVGGVSVE) form an SNARE-like region. The chain crosses the membrane as a helical; Anchor for type IV membrane protein span at residues 215–234 (AATIFSAVLLAAVALAVCVA). The Extracellular segment spans residues 235-237 (KLS).

The protein belongs to the RGS7BP/RGS9BP family. In terms of assembly, specifically interacts with isoform RGS9-1 of RGS9. Component of the RGS9-1-Gbeta5 complex composed of RGS9-1, Gbeta5 (GNB5) and RGS9BP. Specifically expressed in the retina. Only present in photoreceptors (at protein level).

The protein resides in the membrane. Regulator of G protein-coupled receptor (GPCR) signaling in phototransduction. Participates in the recovery phase of visual transduction via its interaction with RGS9-1 isoform. Acts as a membrane-anchor that mediates the targeting of RGS9-1 to the photoreceptor outer segment, where phototransduction takes place. Enhances the ability of RGS9-1 to stimulate G protein GTPase activity, allowing the visual signal to be terminated on the physiologically time scale. It also controls the proteolytic stability of RGS9-1, probably by protecting it from degradation. The sequence is that of Regulator of G-protein signaling 9-binding protein (RGS9BP) from Bos taurus (Bovine).